We begin with the raw amino-acid sequence, 321 residues long: Auxin-responsive protein IAA8 (321 aa).

The EAR-like (transcriptional repression) motif lies at 54-58 (LRLGL). Residues 199 to 301 (VLFVKVSMDG…TCQKLKIMKG (103 aa)) enclose the PB1 domain.

The protein belongs to the Aux/IAA family. Homodimers and heterodimers. Interacts with TPL. In terms of tissue distribution, highly expressed in the whole plant.

It is found in the nucleus. In terms of biological role, aux/IAA proteins are short-lived transcriptional factors that function as repressors of early auxin response genes at low auxin concentrations. Repression is thought to result from the interaction with auxin response factors (ARFs), proteins that bind to the auxin-responsive promoter element (AuxRE). Formation of heterodimers with ARF proteins may alter their ability to modulate early auxin response genes expression. The protein is Auxin-responsive protein IAA8 (IAA8) of Arabidopsis thaliana (Mouse-ear cress).